A 293-amino-acid chain; its full sequence is MPWIQLKLNTTGANAEDLSDALMEAGAVSITFQDTHDTPVFEPLPGETRLWGDTDVIGLFDAETDMNDVVAILENHPLLGAGFAHKIEQLEDKDWEREWMDNFHPMRFGERLWICPSWRDVPDENAVNVMLDPGLAFGTGTHPTTSLCLQWLDSLDLTGKTVIDFGCGSGILAIAALKLGAAKAIGIDIDPQAIQASRDNAERNGVSDRLELYLPKDQPEAMKADVVVANILAGPLRELAPLISVLPVSGGLLGLSGILASQAESVCEAYADSFALDPVVEKEEWCRITGRKN.

S-adenosyl-L-methionine-binding residues include Thr145, Gly166, Asp188, and Asn230.

This sequence belongs to the methyltransferase superfamily. PrmA family.

It localises to the cytoplasm. The catalysed reaction is L-lysyl-[protein] + 3 S-adenosyl-L-methionine = N(6),N(6),N(6)-trimethyl-L-lysyl-[protein] + 3 S-adenosyl-L-homocysteine + 3 H(+). Methylates ribosomal protein L11. In Escherichia coli (strain SMS-3-5 / SECEC), this protein is Ribosomal protein L11 methyltransferase.